Consider the following 242-residue polypeptide: Ribonuclease 3 (242 aa).

One can recognise an RNase III domain in the interval 12 to 139; the sequence is ANELLEALGT…LIGATFLEHG (128 aa). Glutamate 51 lines the Mg(2+) pocket. Residue aspartate 55 is part of the active site. Positions 125 and 128 each coordinate Mg(2+). The active site involves glutamate 128. In terms of domain architecture, DRBM spans 165-236; the sequence is LDWKTSLTVK…AEAGWKSLDS (72 aa).

Belongs to the ribonuclease III family. In terms of assembly, homodimer. Mg(2+) serves as cofactor.

The protein localises to the cytoplasm. The catalysed reaction is Endonucleolytic cleavage to 5'-phosphomonoester.. In terms of biological role, digests double-stranded RNA. Involved in the processing of primary rRNA transcript to yield the immediate precursors to the large and small rRNAs (23S and 16S). Processes some mRNAs, and tRNAs when they are encoded in the rRNA operon. Processes pre-crRNA and tracrRNA of type II CRISPR loci if present in the organism. This is Ribonuclease 3 from Bifidobacterium longum (strain NCC 2705).